Here is a 220-residue protein sequence, read N- to C-terminus: Ribose-5-phosphate isomerase A (220 aa).

Residues 28-31 (TGST), 81-84 (DGAD), and 94-97 (KGGG) contribute to the substrate site. Glu103 functions as the Proton acceptor in the catalytic mechanism. Lys121 serves as a coordination point for substrate.

The protein belongs to the ribose 5-phosphate isomerase family. In terms of assembly, homodimer.

The enzyme catalyses aldehydo-D-ribose 5-phosphate = D-ribulose 5-phosphate. It participates in carbohydrate degradation; pentose phosphate pathway; D-ribose 5-phosphate from D-ribulose 5-phosphate (non-oxidative stage): step 1/1. Its function is as follows. Catalyzes the reversible conversion of ribose-5-phosphate to ribulose 5-phosphate. The protein is Ribose-5-phosphate isomerase A of Shewanella baltica (strain OS185).